Here is a 352-residue protein sequence, read N- to C-terminus: Chorismate synthase (352 aa).

An NADP(+)-binding site is contributed by R48. Residues 125–127 (RSS), 238–239 (NA), G278, 293–297 (KPTSS), and R319 each bind FMN.

The protein belongs to the chorismate synthase family. In terms of assembly, homotetramer. FMNH2 is required as a cofactor.

The enzyme catalyses 5-O-(1-carboxyvinyl)-3-phosphoshikimate = chorismate + phosphate. The protein operates within metabolic intermediate biosynthesis; chorismate biosynthesis; chorismate from D-erythrose 4-phosphate and phosphoenolpyruvate: step 7/7. Its function is as follows. Catalyzes the anti-1,4-elimination of the C-3 phosphate and the C-6 proR hydrogen from 5-enolpyruvylshikimate-3-phosphate (EPSP) to yield chorismate, which is the branch point compound that serves as the starting substrate for the three terminal pathways of aromatic amino acid biosynthesis. This reaction introduces a second double bond into the aromatic ring system. This is Chorismate synthase from Legionella pneumophila (strain Paris).